We begin with the raw amino-acid sequence, 59 residues long: Small ribosomal subunit protein bS21A (59 aa).

Belongs to the bacterial ribosomal protein bS21 family.

This Gloeobacter violaceus (strain ATCC 29082 / PCC 7421) protein is Small ribosomal subunit protein bS21A.